A 238-amino-acid chain; its full sequence is Large ribosomal subunit protein uL1 (238 aa).

Belongs to the universal ribosomal protein uL1 family. As to quaternary structure, part of the 50S ribosomal subunit.

Its function is as follows. Binds directly to 23S rRNA. The L1 stalk is quite mobile in the ribosome, and is involved in E site tRNA release. Functionally, protein L1 is also a translational repressor protein, it controls the translation of the L11 operon by binding to its mRNA. The protein is Large ribosomal subunit protein uL1 of Salinispora tropica (strain ATCC BAA-916 / DSM 44818 / JCM 13857 / NBRC 105044 / CNB-440).